The chain runs to 379 residues: Cytochrome b (379 aa).

The next 4 helical transmembrane spans lie at 33 to 53 (FGSL…FLAM), 77 to 98 (WTIR…FIHV), 113 to 133 (WNIG…GYVL), and 178 to 198 (FFAL…IHLL). 2 residues coordinate heme b: H83 and H97. Residues H182 and H196 each contribute to the heme b site. H201 provides a ligand contact to a ubiquinone. 4 consecutive transmembrane segments (helical) span residues 226–246 (TKDF…TLFY), 288–308 (PGGV…PFLQ), 320–340 (LSQF…WIGG), and 347–367 (FISI…FIMP).

The protein belongs to the cytochrome b family. The cytochrome bc1 complex contains 11 subunits: 3 respiratory subunits (MT-CYB, CYC1 and UQCRFS1), 2 core proteins (UQCRC1 and UQCRC2) and 6 low-molecular weight proteins (UQCRH/QCR6, UQCRB/QCR7, UQCRQ/QCR8, UQCR10/QCR9, UQCR11/QCR10 and a cleavage product of UQCRFS1). This cytochrome bc1 complex then forms a dimer. The cofactor is heme b.

The protein resides in the mitochondrion inner membrane. In terms of biological role, component of the ubiquinol-cytochrome c reductase complex (complex III or cytochrome b-c1 complex) that is part of the mitochondrial respiratory chain. The b-c1 complex mediates electron transfer from ubiquinol to cytochrome c. Contributes to the generation of a proton gradient across the mitochondrial membrane that is then used for ATP synthesis. The protein is Cytochrome b (MT-CYB) of Lepilemur ruficaudatus (Red-tailed sportive lemur).